A 623-amino-acid chain; its full sequence is Laccase-1 (623 aa).

A signal peptide spans 1 to 22 (MKTFTSALALVVGMLAPGAVVA). Positions 23 to 50 (APPSTPAQRDLVELREARQEGGKDLRPR) are excised as a propeptide. The cysteines at positions 54 and 62 are disulfide-linked. N-linked (GlcNAc...) asparagine glycosylation is found at Asn89 and Asn138. Residues His143, His145, His188, and His190 each contribute to the Cu cation site. 2 cysteine pairs are disulfide-bonded: Cys164–Cys590 and Cys348–Cys382. 4 N-linked (GlcNAc...) asparagine glycosylation sites follow: Asn251, Asn266, Asn294, and Asn339. N-linked (GlcNAc...) asparagine glycosylation is found at Asn426 and Asn446. Positions 481, 484, 486, 552, 553, 554, and 558 each coordinate Cu cation. Positions 610-623 (KRRRWVEESEWLVR) are excised as a propeptide.

It belongs to the multicopper oxidase family. Monomer. It depends on Cu cation as a cofactor. As to expression, secreted protein; extracellular space.

It carries out the reaction 4 hydroquinone + O2 = 4 benzosemiquinone + 2 H2O. In terms of biological role, lignin degradation and detoxification of lignin-derived products. The protein is Laccase-1 (LAC1) of Melanocarpus albomyces.